The chain runs to 494 residues: Solute carrier family 2, facilitated glucose transporter member 3 (494 aa).

The Cytoplasmic portion of the chain corresponds to 1 to 10 (MGTTKVTTPL). Residues 11-32 (IFAISIATIGSFQFGYNTGVIN) form a helical membrane-spanning segment. At 33–64 (APEAIIKDFLNYTLEERSETPPSSVLLTSLWS) the chain is on the extracellular side. N-linked (GlcNAc...) asparagine glycosylation is present at asparagine 43. A helical transmembrane segment spans residues 65–85 (LSVAIFSVGGMIGSFSVGLFV). The Cytoplasmic portion of the chain corresponds to 86-90 (NRFGR). The helical transmembrane segment at 91-111 (RNSMLIVNLLAIAGGCLMGFC) threads the bilayer. At 112 to 118 (KIAESVE) the chain is on the extracellular side. The chain crosses the membrane as a helical span at residues 119–142 (MLILGRLIIGLFCGLCTGFVPMYI). Residues 143 to 153 (GEISPTALRGA) are Cytoplasmic-facing. A helical transmembrane segment spans residues 154-174 (FGTLNQLGIVIGILVAQIFGL). Residue glutamine 159 participates in D-glucose binding. Over 175 to 183 (KVILGTEDL) the chain is Extracellular. The chain crosses the membrane as a helical span at residues 184–204 (WPLLLGFTILPAIIQCAALPF). The Cytoplasmic portion of the chain corresponds to 205–269 (CPESPRFLLI…LFRAPNYRQP (65 aa)). Threonine 232 is subject to Phosphothreonine. The chain crosses the membrane as a helical span at residues 270–290 (IIISIMLQLSQQLSGINAVFY). Residues 277–279 (QLS) are important for selectivity against fructose. D-glucose contacts are provided by residues 280–281 (QQ) and asparagine 286. Residues 291–304 (YSTGIFKDAGVQEP) lie on the Extracellular side of the membrane. A helical membrane pass occupies residues 305 to 325 (VYATIGAGVVNTIFTVVSVFL). D-glucose is bound at residue asparagine 315. The Cytoplasmic segment spans residues 326-331 (VERAGR). Residues 332–352 (RTLHLIGLGGMAFCSILMTIS) form a helical membrane-spanning segment. At 353–363 (LLLKDNYSWMS) the chain is on the extracellular side. The helical transmembrane segment at 364-389 (FICIGAILVFVAFFEIGPGPIPWFIV) threads the bilayer. Glutamate 378 and tryptophan 386 together coordinate D-glucose. Over 390–399 (AELFGQGPRP) the chain is Cytoplasmic. A helical membrane pass occupies residues 400–420 (AAMAVAGCSNWTSNFLVGLLF). Residues 421–429 (PSATFYLGA) lie on the Extracellular side of the membrane. A helical transmembrane segment spans residues 430–450 (YVFIVFTVFLVIFWVFTFFKV). Topologically, residues 451-494 (PETRGRTFEEITRAFEGQVQTGTRGEKGPIMEMNSIQPTKDTNA) are cytoplasmic. The interval 473-494 (TRGEKGPIMEMNSIQPTKDTNA) is disordered. Residues 484 to 494 (NSIQPTKDTNA) show a composition bias toward polar residues. Residue serine 485 is modified to Phosphoserine. Threonine 492 carries the post-translational modification Phosphothreonine.

This sequence belongs to the major facilitator superfamily. Sugar transporter (TC 2.A.1.1) family. Glucose transporter subfamily. Interacts with SMIM43; the interaction may promote SLC2A3-mediated glucose transport to meet the energy needs of mesendoderm differentiation. Detected in placenta.

The protein resides in the cell membrane. The protein localises to the perikaryon. It is found in the cell projection. The enzyme catalyses D-glucose(out) = D-glucose(in). The catalysed reaction is D-galactose(in) = D-galactose(out). With respect to regulation, deoxyglucose transport is inhibited by D-glucose, D-galactose and maltose. Galactose transport is inhibited by D-glucose and maltose. Functionally, facilitative glucose transporter. Can also mediate the uptake of various other monosaccharides across the cell membrane. Mediates the uptake of glucose, 2-deoxyglucose, galactose, mannose, xylose and fucose, and probably also dehydroascorbate. Does not mediate fructose transport. Required for mesendoderm differentiation. The sequence is that of Solute carrier family 2, facilitated glucose transporter member 3 from Ovis aries (Sheep).